An 834-amino-acid chain; its full sequence is Structure-specific endonuclease subunit SLX4 (834 aa).

Disordered regions lie at residues Arg80–Thr105, Thr272–Lys307, Gln332–Val372, Gly401–Ala421, Glu603–Leu649, and Ala720–Pro740. Positions Pro279–Gln295 are enriched in polar residues. Residues Gln296–Lys305 show a composition bias toward basic residues. Polar residues-rich tracts occupy residues Ser345–Asn366 and Asp412–Ala421. Positions Asp611–Pro630 are enriched in basic and acidic residues. The segment covering Gln729–Pro740 has biased composition (low complexity).

It belongs to the SLX4 family. As to quaternary structure, forms a heterodimer with SLX1. In terms of processing, phosphorylated in response to DNA damage.

The protein resides in the nucleus. Regulatory subunit of the SLX1-SLX4 structure-specific endonuclease that resolves DNA secondary structures generated during DNA repair and recombination. Has endonuclease activity towards branched DNA substrates, introducing single-strand cuts in duplex DNA close to junctions with ss-DNA. The sequence is that of Structure-specific endonuclease subunit SLX4 from Ajellomyces capsulatus (strain NAm1 / WU24) (Darling's disease fungus).